The sequence spans 273 residues: 4-diphosphocytidyl-2-C-methyl-D-erythritol kinase (273 aa).

The active site involves lysine 12. ATP is bound at residue 90–100; sequence PVASGIGGGSA. Residue aspartate 122 is part of the active site.

This sequence belongs to the GHMP kinase family. IspE subfamily.

The enzyme catalyses 4-CDP-2-C-methyl-D-erythritol + ATP = 4-CDP-2-C-methyl-D-erythritol 2-phosphate + ADP + H(+). It participates in isoprenoid biosynthesis; isopentenyl diphosphate biosynthesis via DXP pathway; isopentenyl diphosphate from 1-deoxy-D-xylulose 5-phosphate: step 3/6. In terms of biological role, catalyzes the phosphorylation of the position 2 hydroxy group of 4-diphosphocytidyl-2C-methyl-D-erythritol. This Paracoccus denitrificans (strain Pd 1222) protein is 4-diphosphocytidyl-2-C-methyl-D-erythritol kinase.